The sequence spans 874 residues: MSTDRYNARDAEPRWQAIWNERGIFRTRNDDPRPKFFVMEMFPYPSGRIHIGHGRNYVMGDVLARYKRMQGFNVLHPMGWDSFGLPAENAAIERGIHPKSWTYENIASMKEQLQLLGLSLDWNREVATCDPSYYAEQQRLFLDLFENDLAYRKESEVNWDPVDNTVLANEQVIDGRGWRSGAVVERRKLNQWFFRITAFAQELLDAIDTLDRWPDKVRLMQRNWIGRSEGLEVLFELSKGSVAAAGTSAVKVYTTRPDTLFGASFLALSPDHPLTQHLAATRPDLAAFVADCKTGGTSAEAIETQEKKGFDTGLTVVHPLDAARTVPVYVANFVLMDYGTGAIFGCPAHDQRDLDFARKYGLTVTPVVLPPGADPAVFAVGSEAYDGEGTLYNSQFLDGLSIADAKEQVARRLERFRVGEQPQGTRKVNFRLRDWGISRQRYWGCPIPIIHCDSCGPVAVPREQLPVELPDDVTFDRPGNPLDRAKAWRDVPCPKCGAPARRETDTMDTFVDSSWYFLRYASDNPDKPLDKDAVRHWLPVDQYIGGIEHAILHLLYSRFFTRALKACGRVDVAEPFAGLFTQGMIVHETYKDKDGRWLFPEEVKLLGDGKAEKLDDGSPVTVGPPEKMSKSKKNVVPPEVVVDTYGVDAGRWFMLSDTPPERDSEWTQSGIEGAWRFVQRVWRQVQEAIELGAPKGADKPASFDAAATALRRAAHGLAHQVADDVERLRFNVAVAHVHEFANAFGQAIASARTASPVPADLAFALREAAEIVTRVVGPMVPHLAEECWAALGYDTLLAEAAWPKAEPELLVENTITLPIQINGKKRDDITVPRDATAAEVEAAVLEMESVRRALDGKAPKRIIVVPQRIVNVVA.

Residues 43–53 carry the 'HIGH' region motif; it reads PYPSGRIHIGH. The disordered stretch occupies residues 614–634; the sequence is LDDGSPVTVGPPEKMSKSKKN. The 'KMSKS' region motif lies at 627–631; it reads KMSKS. K630 is an ATP binding site.

This sequence belongs to the class-I aminoacyl-tRNA synthetase family.

The protein resides in the cytoplasm. It catalyses the reaction tRNA(Leu) + L-leucine + ATP = L-leucyl-tRNA(Leu) + AMP + diphosphate. The sequence is that of Leucine--tRNA ligase from Azorhizobium caulinodans (strain ATCC 43989 / DSM 5975 / JCM 20966 / LMG 6465 / NBRC 14845 / NCIMB 13405 / ORS 571).